The following is a 470-amino-acid chain: Sorting nexin-17 (470 aa).

In terms of domain architecture, PX spans 1–109; the sequence is MHFSIPETES…SFLRRAQQET (109 aa). The a 1,2-diacyl-sn-glycero-3-phospho-(1D-myo-inositol-3-phosphate) site is built by Arg36, Ser38, Lys62, and Arg75. Residues 115 to 206 enclose the Ras-associating domain; the sequence is EEVSLEVLLS…YKIVLRKSYW (92 aa). The interval 115–432 is FERM-like; that stretch reads EEVSLEVLLS…DASRESMVKL (318 aa). Residues 270–432 form a PTB-like F3 module region; that stretch reads GYLRFDACVA…DASRESMVKL (163 aa). The disordered stretch occupies residues 401-425; that stretch reads GGNLRRSDSQQAVKSPPLLESPDAS. Phosphoserine is present on residues Ser407, Ser409, Ser415, Ser421, Ser437, and Ser440.

It belongs to the sorting nexin family. In terms of assembly, monomer. Interacts with APP (via cytoplasmic YXNPXY motif). Interacts with KIF1B. Interacts with the C-termini of P-selectin, PTC, LDLR, VLDLR, LRP1 and LRP8. Interacts with KRIT1 (via N-terminus). Interacts with HRAS. Interacts with ITGB1 and ITGB5 (via NPxY motif). Interacts with CCDC22 and CCDC93; the interaction associates SNX17 with the CCC complex. Interacts (via C-terminus) with VPS26C and VPS35L; the interactions are direct and associate SNX17 with the retriever complex.

The protein localises to the cytoplasm. It localises to the early endosome. Its subcellular location is the cytoplasmic vesicle membrane. Functionally, critical regulator of endosomal recycling of numerous surface proteins, including integrins, signaling receptor and channels. Binds to NPxY sequences in the cytoplasmic tails of target cargos. Associates with retriever and CCC complexes to prevent lysosomal degradation and promote cell surface recycling of numerous cargos such as integrins ITGB1, ITGB5 and their associated alpha subunits. Also required for maintenance of normal cell surface levels of APP and LRP1. Interacts with membranes containing phosphatidylinositol 3-phosphate (PtdIns(3P)). The polypeptide is Sorting nexin-17 (Snx17) (Rattus norvegicus (Rat)).